We begin with the raw amino-acid sequence, 151 residues long: UPF0208 membrane protein YfbV (151 aa).

2 helical membrane passes run 46 to 65 (YAIR…QIAL) and 69 to 91 (LGPA…WWLG).

It belongs to the UPF0208 family.

It is found in the cell inner membrane. This Salmonella choleraesuis (strain SC-B67) protein is UPF0208 membrane protein YfbV.